The chain runs to 287 residues: Probable endoribonuclease YicC (287 aa).

The protein belongs to the YicC/YloC family. Requires a divalent metal cation as cofactor.

Functionally, probably a ssRNA endonuclease. In terms of biological role, might contribute to small RNA (sRNA) regulation. This chain is Probable endoribonuclease YicC, found in Salmonella typhimurium (strain LT2 / SGSC1412 / ATCC 700720).